Consider the following 297-residue polypeptide: 4-hydroxy-tetrahydrodipicolinate synthase (297 aa).

Thr49 is a pyruvate binding site. The active-site Proton donor/acceptor is Tyr137. Catalysis depends on Lys165, which acts as the Schiff-base intermediate with substrate. Ile208 serves as a coordination point for pyruvate.

This sequence belongs to the DapA family. As to quaternary structure, homotetramer; dimer of dimers.

Its subcellular location is the cytoplasm. It carries out the reaction L-aspartate 4-semialdehyde + pyruvate = (2S,4S)-4-hydroxy-2,3,4,5-tetrahydrodipicolinate + H2O + H(+). It participates in amino-acid biosynthesis; L-lysine biosynthesis via DAP pathway; (S)-tetrahydrodipicolinate from L-aspartate: step 3/4. In terms of biological role, catalyzes the condensation of (S)-aspartate-beta-semialdehyde [(S)-ASA] and pyruvate to 4-hydroxy-tetrahydrodipicolinate (HTPA). The sequence is that of 4-hydroxy-tetrahydrodipicolinate synthase from Gluconacetobacter diazotrophicus (strain ATCC 49037 / DSM 5601 / CCUG 37298 / CIP 103539 / LMG 7603 / PAl5).